A 761-amino-acid polypeptide reads, in one-letter code: Disintegrin and metalloproteinase domain-containing protein 24 (761 aa).

The first 34 residues, 1–34 (MVAMSEALVHARITLLQAWLRMLLFSSVWPPTWC), serve as a signal peptide directing secretion. The propeptide occupies 35-200 (AEYKGPPETV…GKSTRMQSIY (166 aa)). Over 35–697 (AEYKGPPETV…SKKDAPEKPN (663 aa)) the chain is Extracellular. Asn140 is a glycosylation site (N-linked (GlcNAc...) asparagine). The Cysteine switch motif lies at 172–179 (MRCGLTDE). Cys174 is a Zn(2+) binding site. Positions 208–400 (LYIKLALVID…KSCIHREPRP (193 aa)) constitute a Peptidase M12B domain. Residues Asn227 and Asn301 are each glycosylated (N-linked (GlcNAc...) asparagine). Disulfide bonds link Cys323–Cys393, Cys357–Cys379, Cys359–Cys364, Cys465–Cys485, Cys635–Cys646, Cys640–Cys652, and Cys654–Cys663. His342 is a Zn(2+) binding site. Glu343 is a catalytic residue. Zn(2+) contacts are provided by His346 and His352. 3 N-linked (GlcNAc...) asparagine glycosylation sites follow: Asn378, Asn390, and Asn479. In terms of domain architecture, Disintegrin spans 406 to 493 (LKVCGNGIVE…ECPEDLFVQD (88 aa)). Residues 631–664 (WVNDCTPETCNMKGVCNNKQHCHCDVGWSPPNCQ) enclose the EGF-like domain. The helical transmembrane segment at 698–718 (VIIWLLPIICVAVVLSVLFCL) threads the bilayer. The Cytoplasmic portion of the chain corresponds to 719–761 (SGATKKSREAAASQPAEERVKPPYEGAEPSYETVKPPDEWANP). The disordered stretch occupies residues 725–761 (SREAAASQPAEERVKPPYEGAEPSYETVKPPDEWANP).

Monomer. It depends on Zn(2+) as a cofactor. In terms of processing, the prodomain is removed during sperm passage through the caput epididymis after the protein has reached the cell surface. Not processed in the secretory pathway. In terms of tissue distribution, expressed exclusively in testis and more specifically on the surface of mature sperm (at protein level).

It localises to the membrane. Plasma membrane protease present on mature sperm that may be involved in sperm function during epididymal maturation and/or fertilization. The polypeptide is Disintegrin and metalloproteinase domain-containing protein 24 (Mus musculus (Mouse)).